The chain runs to 490 residues: Protoporphyrinogen oxidase (490 aa).

FAD contacts are provided by residues 7–12 (GGGIAG), 32–33 (EK), Trp-40, 61–64 (GPRT), and 466–468 (VSI).

This sequence belongs to the protoporphyrinogen/coproporphyrinogen oxidase family. Protoporphyrinogen oxidase subfamily. The cofactor is FAD.

It is found in the mitochondrion. The enzyme catalyses protoporphyrinogen IX + 3 O2 = protoporphyrin IX + 3 H2O2. It participates in porphyrin-containing compound metabolism; protoporphyrin-IX biosynthesis; protoporphyrin-IX from protoporphyrinogen-IX: step 1/1. Catalyzes the 6-electron oxidation of protoporphyrinogen-IX to form protoporphyrin-IX. The protein is Protoporphyrinogen oxidase (hem14) of Schizosaccharomyces pombe (strain 972 / ATCC 24843) (Fission yeast).